A 194-amino-acid chain; its full sequence is Imidazoleglycerol-phosphate dehydratase (194 aa).

The protein belongs to the imidazoleglycerol-phosphate dehydratase family.

It is found in the cytoplasm. The catalysed reaction is D-erythro-1-(imidazol-4-yl)glycerol 3-phosphate = 3-(imidazol-4-yl)-2-oxopropyl phosphate + H2O. Its pathway is amino-acid biosynthesis; L-histidine biosynthesis; L-histidine from 5-phospho-alpha-D-ribose 1-diphosphate: step 6/9. This chain is Imidazoleglycerol-phosphate dehydratase, found in Lactiplantibacillus plantarum (strain ATCC BAA-793 / NCIMB 8826 / WCFS1) (Lactobacillus plantarum).